The primary structure comprises 144 residues: MKIMVLHGPNLNLLGKREPSVYGSVTLEEINQKLAELAGELGVEICCKQSNSEGELVDLLHRAAEEADAVVFNPGAFTHYSYALRDAVSAIGIPTIEVHLSNIYSREDFRKHSVIAPVASGHICGMGVTGYLLALRAAAALAGT.

The Proton acceptor role is filled by Tyr22. The substrate site is built by Asn73, His79, and Asp86. The active-site Proton donor is His99. Substrate is bound by residues 100-101 (LS) and Arg110.

The protein belongs to the type-II 3-dehydroquinase family. Homododecamer.

The enzyme catalyses 3-dehydroquinate = 3-dehydroshikimate + H2O. Its pathway is metabolic intermediate biosynthesis; chorismate biosynthesis; chorismate from D-erythrose 4-phosphate and phosphoenolpyruvate: step 3/7. Catalyzes a trans-dehydration via an enolate intermediate. The polypeptide is 3-dehydroquinate dehydratase (Pelotomaculum thermopropionicum (strain DSM 13744 / JCM 10971 / SI)).